A 356-amino-acid chain; its full sequence is MDEVIVELKERSYPIYFDYEGFDRVGDLIKKHVRSSKTFVITDSNVYPLYFEKIEESLRKSGFDVLYEVIPAGETSKTMEMAQRLLEVAYDSGLLRDSSIIALGGGVVGDIAGFVAATYMRGIDFIQIPTTLLAQVDSSVGGKVAVNLKKGKNIVGAFYQPKMVYIDTSVLGTLNKREVLGGLAEVIKYGVIWDFDLFTYIEENLGDILRLKKEDLTYIVKRSCEIKAKVVSLDEKEENLRAILNFGHTIGHAIEALTGYERYIHGEAVAIGMAYEARLAFNLGYIDEGYLERILNLIKRAGLPADYEGIEKTDMLNAIKLDKKMREGRINFVLPVGLGKVDIVSVKEEDVLKVLK.

NAD(+) contacts are provided by residues 106–110, 130–131, Lys-143, and Lys-152; these read GVVGD and TT. Positions 185, 248, and 265 each coordinate Zn(2+).

It belongs to the sugar phosphate cyclases superfamily. Dehydroquinate synthase family. NAD(+) serves as cofactor. Requires Co(2+) as cofactor. Zn(2+) is required as a cofactor.

It localises to the cytoplasm. It catalyses the reaction 7-phospho-2-dehydro-3-deoxy-D-arabino-heptonate = 3-dehydroquinate + phosphate. The protein operates within metabolic intermediate biosynthesis; chorismate biosynthesis; chorismate from D-erythrose 4-phosphate and phosphoenolpyruvate: step 2/7. Functionally, catalyzes the conversion of 3-deoxy-D-arabino-heptulosonate 7-phosphate (DAHP) to dehydroquinate (DHQ). This chain is 3-dehydroquinate synthase, found in Caldanaerobacter subterraneus subsp. tengcongensis (strain DSM 15242 / JCM 11007 / NBRC 100824 / MB4) (Thermoanaerobacter tengcongensis).